Consider the following 522-residue polypeptide: Na(+)/H(+) antiporter NhaB (522 aa).

Helical transmembrane passes span 13-33 (FLGNSPDWYKLAIMGFLIINP), 98-118 (LLLVFMVAGIYFMKQLLLFVF), 140-160 (AFLSAFLDALTVIAVVISVSV), 239-259 (FFIRMLPVTLPVFIFGLLVCL), 304-324 (AIIGVWLVLALHLAEVGLVGL), 356-376 (LTVFFAVVAVIIEQSLFTPII), 390-410 (LFYLFNGLLSSVSDNVFVGTV), 446-466 (ATPNGQAAFLFLLTSALAPLI), and 477-497 (ALPYTLVMTIVGLLGVEFLLV).

This sequence belongs to the NhaB Na(+)/H(+) (TC 2.A.34) antiporter family.

It localises to the cell inner membrane. The enzyme catalyses 2 Na(+)(in) + 3 H(+)(out) = 2 Na(+)(out) + 3 H(+)(in). Na(+)/H(+) antiporter that extrudes sodium in exchange for external protons. This Yersinia pestis bv. Antiqua (strain Angola) protein is Na(+)/H(+) antiporter NhaB.